The sequence spans 354 residues: Putative ankyrin repeat protein L284 (354 aa).

ANK repeat units lie at residues 201 to 230 (ILDDILTLIIKSGNVSAFKTLINIIGLSND), 253 to 284 (SRYPQLYLESSIINGRTDIVDNLVKKGSNPIV), and 286 to 314 (LHKAAECAQFDIIWNLSENSLINQNDIDI).

The sequence is that of Putative ankyrin repeat protein L284 from Acanthamoeba polyphaga (Amoeba).